A 632-amino-acid polypeptide reads, in one-letter code: Biosynthetic arginine decarboxylase (632 aa).

K101 bears the N6-(pyridoxal phosphate)lysine mark. 281 to 291 contacts substrate; sequence FDVGGGLGVDY.

Belongs to the Orn/Lys/Arg decarboxylase class-II family. SpeA subfamily. The cofactor is Mg(2+). It depends on pyridoxal 5'-phosphate as a cofactor.

It carries out the reaction L-arginine + H(+) = agmatine + CO2. Its pathway is amine and polyamine biosynthesis; agmatine biosynthesis; agmatine from L-arginine: step 1/1. Functionally, catalyzes the biosynthesis of agmatine from arginine. This is Biosynthetic arginine decarboxylase from Salmonella dublin (strain CT_02021853).